The chain runs to 513 residues: uncharacterized protein (513 aa).

5 helical membrane-spanning segments follow: residues 262-282 (FAIF…FWQL), 304-324 (YMFL…ITYH), 341-361 (EPIP…FEAL), 382-402 (LVIG…VIIV), and 429-449 (MFLA…ILVL). Residues 489–513 (PGTYSRGNGQKGAKREDPKDEENNI) are disordered. A compositionally biased stretch (basic and acidic residues) spans 501 to 513 (AKREDPKDEENNI).

This sequence belongs to the GerABKA family.

The protein localises to the cell membrane. This is an uncharacterized protein from Bacillus subtilis (strain 168).